The primary structure comprises 169 residues: Desumoylating isopeptidase 1 (169 aa).

A PPPDE domain is found at 8–150; it reads HLVRLYVYDM…LGQALRPLLD (143 aa). Histidine 39 is an active-site residue. The Nuclear export signal 1 motif lies at 84–92; that stretch reads IFLEYLSSL. Residue cysteine 109 is part of the active site. Residues 140–154 carry the Nuclear export signal 2 motif; the sequence is PLGQALRPLLDSVQI.

This sequence belongs to the DeSI family. As to quaternary structure, homodimer.

It is found in the cytoplasm. Its subcellular location is the nucleus. The enzyme catalyses S-hexadecanoyl-L-cysteinyl-[protein] + H2O = L-cysteinyl-[protein] + hexadecanoate + H(+). Its function is as follows. Protease which deconjugates SUMO1, SUMO2 and SUMO3 from some substrate proteins. Has isopeptidase but not SUMO-processing activity. Collaborates with ubqln4 in the export of ubiquitinated proteins from the nucleus to the cytoplasm. Exhibits palmitoyl protein thioesterase (S-depalmitoylation) activity towards synthetic substrates 4-methylumbelliferyl-6-S-palmitoyl-beta-D-glucopyranoside and S-depalmitoylation probe 5 (DPP-5). The sequence is that of Desumoylating isopeptidase 1 from Xenopus laevis (African clawed frog).